The chain runs to 141 residues: Aspartate 1-decarboxylase (141 aa).

Catalysis depends on Ser25, which acts as the Schiff-base intermediate with substrate; via pyruvic acid. Position 25 is a pyruvic acid (Ser) (Ser25). Thr57 contacts substrate. The Proton donor role is filled by Tyr58. Residue 73-75 coordinates substrate; it reads GAA.

Belongs to the PanD family. In terms of assembly, heterooctamer of four alpha and four beta subunits. The cofactor is pyruvate. Is synthesized initially as an inactive proenzyme, which is activated by self-cleavage at a specific serine bond to produce a beta-subunit with a hydroxyl group at its C-terminus and an alpha-subunit with a pyruvoyl group at its N-terminus.

The protein resides in the cytoplasm. The enzyme catalyses L-aspartate + H(+) = beta-alanine + CO2. The protein operates within cofactor biosynthesis; (R)-pantothenate biosynthesis; beta-alanine from L-aspartate: step 1/1. Catalyzes the pyruvoyl-dependent decarboxylation of aspartate to produce beta-alanine. This is Aspartate 1-decarboxylase from Salinispora arenicola (strain CNS-205).